The primary structure comprises 282 residues: DNA-binding transcriptional repressor YiaJ (282 aa).

Basic and acidic residues predominate over residues 1-20 (MGKEVMGKKENEMAQEKERP). Positions 1–21 (MGKEVMGKKENEMAQEKERPA) are disordered. An HTH iclR-type domain is found at 23-85 (SQSLFRGLML…PAAGSYRLTT (63 aa)). A DNA-binding region (H-T-H motif) is located at residues 45–64 (LAHLSELAGLNKSTVHRLLQ). The 173-residue stretch at 100-272 (IIHIAAPHLE…AQAISNELGF (173 aa)) folds into the IclR-ED domain.

Its function is as follows. Negatively controls the transcription of the yiaKLMNOPQRS operon, which may be involved in the utilization of 2,3-diketo-L-gulonate. The protein is DNA-binding transcriptional repressor YiaJ (yiaJ) of Escherichia coli (strain K12).